The following is a 533-amino-acid chain: MRSLKRENSGSALSVRSSDSEGDSYHNMDIKKLTNKVKEIDISAFDRTRLFNPRKQRSCHKRAEPVSEEHRKKESSKNSREYTKRNRDEIVTCQKLFSEITAIMRRFKQLTEEMSVETVEVKIKSMIKDCQEMLTKYTNLDSNDRFNIGIPEAEDFLAIFREKAHATMLFEHRPESPNMYTENLFKLREQYHKLTDHKDNLNSSKDKTNYASSKSRLNQRIVREQLKSDCWVCWKSINTMMVQGEQLQEYNNELKKDIWNNILAVYHQIFTMFCKYPEYADKEKMERIVEYFAPVSRTPGHLSVVWNPMPNVVKSPRSEEIPEIKVEYEEVPSSSTFLSNNETTIASDMDMSIDRPQSMDMSQTLSPEQTLSPREKLQVQDRKISTTQETPPALPSPSGTLTLPTVPASTLKRKEFGDLLACPTGKRVTIDEPNRAERTETIMPSRQMMYPMVNYQALPMPPQSIPSMIPPFIPTIPSTSTMPPMMPYPNVLLTAAPGDVAPIDSLTPSFLRALEQQKLMAAFLNHAFQKCQK.

Disordered regions lie at residues 1-30, 53-85, and 359-404; these read MRSL…NMDI, PRKQ…YTKR, and MDMS…LTLP. Over residues 61 to 85 the composition is skewed to basic and acidic residues; that stretch reads KRAEPVSEEHRKKESSKNSREYTKR. A compositionally biased stretch (polar residues) spans 359–372; that stretch reads MDMSQTLSPEQTLS. A compositionally biased stretch (basic and acidic residues) spans 373-384; it reads PREKLQVQDRKI.

The protein resides in the nucleus. The polypeptide is Calcineurin-interacting protein 3 (Caenorhabditis elegans).